Here is an 81-residue protein sequence, read N- to C-terminus: ATP synthase subunit c, chloroplastic (81 aa).

2 helical membrane-spanning segments follow: residues 3–23 and 57–77; these read PLIASASVIAAGLAVGLASIG and LAFMEALTIYGLVVALALLFA.

This sequence belongs to the ATPase C chain family. F-type ATPases have 2 components, F(1) - the catalytic core - and F(0) - the membrane proton channel. F(1) has five subunits: alpha(3), beta(3), gamma(1), delta(1), epsilon(1). F(0) has four main subunits: a(1), b(1), b'(1) and c(10-14). The alpha and beta chains form an alternating ring which encloses part of the gamma chain. F(1) is attached to F(0) by a central stalk formed by the gamma and epsilon chains, while a peripheral stalk is formed by the delta, b and b' chains.

It is found in the plastid. It localises to the chloroplast thylakoid membrane. Functionally, f(1)F(0) ATP synthase produces ATP from ADP in the presence of a proton or sodium gradient. F-type ATPases consist of two structural domains, F(1) containing the extramembraneous catalytic core and F(0) containing the membrane proton channel, linked together by a central stalk and a peripheral stalk. During catalysis, ATP synthesis in the catalytic domain of F(1) is coupled via a rotary mechanism of the central stalk subunits to proton translocation. Its function is as follows. Key component of the F(0) channel; it plays a direct role in translocation across the membrane. A homomeric c-ring of between 10-14 subunits forms the central stalk rotor element with the F(1) delta and epsilon subunits. The sequence is that of ATP synthase subunit c, chloroplastic from Chaetosphaeridium globosum (Charophycean green alga).